The sequence spans 148 residues: MGRFIFVSFSLLVVFFSLSGTEAGVCCPLGWSGYDQNCYKAFEELMNWADAEKFCTQQHKGSHLVSLHNIAEADFVVKKIVSVLKDGVIWMGLNDVWNECNWGWTDGAQLDYKAWNVESNCFIFKTAENHLVTYGLQWDTQFRLQEPG.

A signal peptide spans 1-23 (MGRFIFVSFSLLVVFFSLSGTEA). The region spanning 34–148 (YDQNCYKAFE…DTQFRLQEPG (115 aa)) is the C-type lectin domain.

The protein belongs to the snaclec family. As to quaternary structure, heterodimer; disulfide-linked. Post-translationally, contains disulfide bonds. Expressed by the venom gland.

Its subcellular location is the secreted. Its function is as follows. Interferes with one step of hemostasis (modulation of platelet aggregation, or coagulation cascade, for example). This Echis pyramidum leakeyi (Leakey's carpet viper) protein is Snaclec 4.